The following is a 207-amino-acid chain: ADP-ribosylation factor (207 aa).

A lipid anchor (N-myristoyl glycine) is attached at G2. Residues G32 to T39, D75 to Q79, and N133 to D136 each bind GTP.

This sequence belongs to the small GTPase superfamily. Arf family.

It localises to the golgi apparatus. Functionally, GTP-binding protein involved in protein trafficking; may modulate vesicle budding and uncoating within the Golgi apparatus. The protein is ADP-ribosylation factor (ARF-1) of Encephalitozoon cuniculi (strain GB-M1) (Microsporidian parasite).